We begin with the raw amino-acid sequence, 298 residues long: Protease HtpX (298 aa).

The next 2 helical transmembrane spans lie at isoleucine 4–leucine 24 and threonine 41–isoleucine 61. Residue histidine 147 participates in Zn(2+) binding. Glutamate 148 is a catalytic residue. Histidine 151 provides a ligand contact to Zn(2+). A run of 2 helical transmembrane segments spans residues leucine 162–isoleucine 182 and glycine 193–alanine 213. Glutamate 225 is a Zn(2+) binding site.

This sequence belongs to the peptidase M48B family. The cofactor is Zn(2+).

The protein localises to the cell inner membrane. This is Protease HtpX from Alcanivorax borkumensis (strain ATCC 700651 / DSM 11573 / NCIMB 13689 / SK2).